We begin with the raw amino-acid sequence, 523 residues long: GMP synthase [glutamine-hydrolyzing] (523 aa).

The Glutamine amidotransferase type-1 domain maps to 8 to 205 (KILILDFGSQ…VVNICGCETK (198 aa)). Catalysis depends on Cys85, which acts as the Nucleophile. Catalysis depends on residues His179 and Glu181. The region spanning 206–398 (WTAENIIEDA…LGLPAEMINR (193 aa)) is the GMPS ATP-PPase domain. 233-239 (SGGVDSS) contributes to the ATP binding site.

Homodimer.

It carries out the reaction XMP + L-glutamine + ATP + H2O = GMP + L-glutamate + AMP + diphosphate + 2 H(+). Its pathway is purine metabolism; GMP biosynthesis; GMP from XMP (L-Gln route): step 1/1. In terms of biological role, catalyzes the synthesis of GMP from XMP. The polypeptide is GMP synthase [glutamine-hydrolyzing] (Haemophilus influenzae (strain PittGG)).